Here is a 205-residue protein sequence, read N- to C-terminus: Endoplasmic reticulum membrane protein complex subunit 10 (205 aa).

An N-terminal signal peptide occupies residues 1-17; the sequence is MLVRLLRVILLASMVFC. Residues 18 to 172 are Lumenal-facing; the sequence is ADILQLSYSD…VKEVSWFQKN (155 aa). The N-linked (GlcNAc...) asparagine glycan is linked to Asn-47. Residues 173–190 traverse the membrane as a helical segment; it reads WKMLLLGLLIYNFVAGSA. At 191 to 205 the chain is on the cytoplasmic side; the sequence is KKQQQGGAGADQKTE.

As to quaternary structure, component of the ER membrane protein complex (EMC).

The protein localises to the endoplasmic reticulum membrane. Part of the endoplasmic reticulum membrane protein complex (EMC) that enables the energy-independent insertion into endoplasmic reticulum membranes of newly synthesized membrane proteins. Preferentially accommodates proteins with transmembrane domains that are weakly hydrophobic or contain destabilizing features such as charged and aromatic residues. Involved in the cotranslational insertion of multi-pass membrane proteins in which stop-transfer membrane-anchor sequences become ER membrane spanning helices. It is also required for the post-translational insertion of tail-anchored/TA proteins in endoplasmic reticulum membranes. By mediating the proper cotranslational insertion of N-terminal transmembrane domains in an N-exo topology, with translocated N-terminus in the lumen of the ER, controls the topology of multi-pass membrane proteins. This is Endoplasmic reticulum membrane protein complex subunit 10 from Saccharomyces cerevisiae (strain ATCC 204508 / S288c) (Baker's yeast).